We begin with the raw amino-acid sequence, 89 residues long: Large ribosomal subunit protein bL27 (89 aa).

A disordered region spans residues 1–26 (MATKKAGGSSKNGRDSAGRRLGLKKT).

The protein belongs to the bacterial ribosomal protein bL27 family.

This is Large ribosomal subunit protein bL27 from Orientia tsutsugamushi (strain Boryong) (Rickettsia tsutsugamushi).